The sequence spans 505 residues: ATP synthase subunit beta (505 aa).

The disordered stretch occupies residues 1–25 (MAKAATPKETAAVKKPAAPKKAATA). Position 183–190 (183–190 (GGAGVGKT)) interacts with ATP.

It belongs to the ATPase alpha/beta chains family. As to quaternary structure, F-type ATPases have 2 components, CF(1) - the catalytic core - and CF(0) - the membrane proton channel. CF(1) has five subunits: alpha(3), beta(3), gamma(1), delta(1), epsilon(1). CF(0) has three main subunits: a(1), b(2) and c(9-12). The alpha and beta chains form an alternating ring which encloses part of the gamma chain. CF(1) is attached to CF(0) by a central stalk formed by the gamma and epsilon chains, while a peripheral stalk is formed by the delta and b chains.

The protein resides in the cell inner membrane. It carries out the reaction ATP + H2O + 4 H(+)(in) = ADP + phosphate + 5 H(+)(out). Its function is as follows. Produces ATP from ADP in the presence of a proton gradient across the membrane. The catalytic sites are hosted primarily by the beta subunits. In Sinorhizobium fredii (strain NBRC 101917 / NGR234), this protein is ATP synthase subunit beta.